Consider the following 990-residue polypeptide: Bifunctional glutamine synthetase adenylyltransferase/adenylyl-removing enzyme (990 aa).

The interval 1–474 (MIFSAITADL…HYAKLFEGDP (474 aa)) is adenylyl removase. An adenylyl transferase region spans residues 478–990 (AKLPPVDYGA…FNRLIGGEDA (513 aa)).

This sequence belongs to the GlnE family. The cofactor is Mg(2+).

It catalyses the reaction [glutamine synthetase]-O(4)-(5'-adenylyl)-L-tyrosine + phosphate = [glutamine synthetase]-L-tyrosine + ADP. The enzyme catalyses [glutamine synthetase]-L-tyrosine + ATP = [glutamine synthetase]-O(4)-(5'-adenylyl)-L-tyrosine + diphosphate. Involved in the regulation of glutamine synthetase GlnA, a key enzyme in the process to assimilate ammonia. When cellular nitrogen levels are high, the C-terminal adenylyl transferase (AT) inactivates GlnA by covalent transfer of an adenylyl group from ATP to specific tyrosine residue of GlnA, thus reducing its activity. Conversely, when nitrogen levels are low, the N-terminal adenylyl removase (AR) activates GlnA by removing the adenylyl group by phosphorolysis, increasing its activity. The regulatory region of GlnE binds the signal transduction protein PII (GlnB) which indicates the nitrogen status of the cell. The protein is Bifunctional glutamine synthetase adenylyltransferase/adenylyl-removing enzyme of Rhodopseudomonas palustris (strain TIE-1).